Reading from the N-terminus, the 225-residue chain is Membrane protein (225 aa).

Topologically, residues 1–20 are virion surface; the sequence is MDNTTNCTLGTEQAVQLFKE. Residues 21-41 form a helical membrane-spanning segment; sequence YNLFVTAFLLFLTILLQYGYA. At 42–51 the chain is on the intravirion side; sequence TRNKVIYILK. A helical membrane pass occupies residues 52–72; that stretch reads MIVLWCFWPLNIAVGAISCIY. Residues 73–77 are Virion surface-facing; it reads PPNTG. A helical membrane pass occupies residues 78 to 98; it reads GLVAAIILTVFACLSFIGYWI. At 99–225 the chain is on the intravirion side; the sequence is QSFRLFKRCR…VATGGSSLYT (127 aa).

The protein belongs to the gammacoronaviruses M protein family. In terms of assembly, homomultimer. Interacts with envelope E protein in the budding compartment of the host cell, which is located between endoplasmic reticulum and the Golgi complex. Forms a complex with HE and S proteins. Interacts with nucleocapsid N protein. This interaction probably participates in RNA packaging into the virus.

It is found in the virion membrane. The protein resides in the host Golgi apparatus membrane. Component of the viral envelope that plays a central role in virus morphogenesis and assembly via its interactions with other viral proteins. This is Membrane protein from Avian infectious bronchitis virus (strain 6/82) (IBV).